The primary structure comprises 323 residues: MSYARIIGTGSYLPDEVITNHDLERLIDTSDEWIRERTGITERRRVAPDQTCGDLAEEAARRALEAADVSLSSIDLVIVGTCTPDRVFPSTACLLQERLGMRHGSLAFDLSAACSGFVYGLGVADQFFRTGAVRRALVIGAETMTRILDWNDRATCVLFGDGAGAVVLDRSEEPGILSTHLHSDGRYQDLLGVPWGPGQGYEKRDALGPYITMQGNEVFKVAVRTLSRIVDESLAANGLEKRDIDWLVPHQANIRIIQATARKLEMPMERVVVTVDKQGNTSAASIPMALDTAIRDGRIKRGDLLLLEAFGGGFTWGSALIRY.

Catalysis depends on residues Cys-114 and His-250. The interval 251–255 (QANIR) is ACP-binding. Asn-280 is an active-site residue.

Belongs to the thiolase-like superfamily. FabH family. In terms of assembly, homodimer.

Its subcellular location is the cytoplasm. It catalyses the reaction malonyl-[ACP] + acetyl-CoA + H(+) = 3-oxobutanoyl-[ACP] + CO2 + CoA. Its pathway is lipid metabolism; fatty acid biosynthesis. Functionally, catalyzes the condensation reaction of fatty acid synthesis by the addition to an acyl acceptor of two carbons from malonyl-ACP. Catalyzes the first condensation reaction which initiates fatty acid synthesis and may therefore play a role in governing the total rate of fatty acid production. Possesses both acetoacetyl-ACP synthase and acetyl transacylase activities. Its substrate specificity determines the biosynthesis of branched-chain and/or straight-chain of fatty acids. The polypeptide is Beta-ketoacyl-[acyl-carrier-protein] synthase III (Alkalilimnicola ehrlichii (strain ATCC BAA-1101 / DSM 17681 / MLHE-1)).